Consider the following 420-residue polypeptide: Glutamyl-tRNA reductase (420 aa).

Residues 49-52 (TCNR), serine 109, 114-116 (EPQ), and glutamine 120 each bind substrate. Residue cysteine 50 is the Nucleophile of the active site. An NADP(+)-binding site is contributed by 189–194 (GAGETI).

The protein belongs to the glutamyl-tRNA reductase family. In terms of assembly, homodimer.

It carries out the reaction (S)-4-amino-5-oxopentanoate + tRNA(Glu) + NADP(+) = L-glutamyl-tRNA(Glu) + NADPH + H(+). The protein operates within porphyrin-containing compound metabolism; protoporphyrin-IX biosynthesis; 5-aminolevulinate from L-glutamyl-tRNA(Glu): step 1/2. In terms of biological role, catalyzes the NADPH-dependent reduction of glutamyl-tRNA(Glu) to glutamate 1-semialdehyde (GSA). The sequence is that of Glutamyl-tRNA reductase from Yersinia enterocolitica serotype O:8 / biotype 1B (strain NCTC 13174 / 8081).